The chain runs to 483 residues: Regulatory protein ViaA (483 aa).

Belongs to the ViaA family. Homodimer. Interacts with RavA.

It localises to the cytoplasm. In terms of biological role, component of the RavA-ViaA chaperone complex, which may act on the membrane to optimize the function of some of the respiratory chains. ViaA stimulates the ATPase activity of RavA. The sequence is that of Regulatory protein ViaA from Shigella dysenteriae serotype 1 (strain Sd197).